A 300-amino-acid chain; its full sequence is MTKHLPTISDISPLLKAEILAEALPYIRSYHGKTIVIKYGGNAMVEERLKESFARDVILLKLVGMNPVVVHGGGPQIDEALKKIGKTGTFIQGMRVTDEETMEVVEWVLGGEVQQDIVMLINHFGGQAVGLTGKDGGLIRAKKMLVANEKQPGGTIDLGFVGEIEAINPAVVKALQDDAFIPVISPIGFSEEGQAYNINADLVAGKMAEILHAEKLVMMTNIPGVMDKNGTLLTDLTAREIDGLFADGTISGGMLPKISSALDAAKSGVNSVHIIDGRIEHSLLLEILTEQAFGTMIRSR.

Residues glycine 73–glycine 74, arginine 95, and asparagine 197 contribute to the substrate site.

This sequence belongs to the acetylglutamate kinase family. ArgB subfamily.

It localises to the cytoplasm. The enzyme catalyses N-acetyl-L-glutamate + ATP = N-acetyl-L-glutamyl 5-phosphate + ADP. The protein operates within amino-acid biosynthesis; L-arginine biosynthesis; N(2)-acetyl-L-ornithine from L-glutamate: step 2/4. In terms of biological role, catalyzes the ATP-dependent phosphorylation of N-acetyl-L-glutamate. This chain is Acetylglutamate kinase, found in Polynucleobacter necessarius subsp. necessarius (strain STIR1).